The primary structure comprises 81 residues: Cytochrome b559 subunit alpha (81 aa).

Residues valine 21–tryptophan 35 form a helical membrane-spanning segment. Histidine 23 contacts heme.

This sequence belongs to the PsbE/PsbF family. In terms of assembly, heterodimer of an alpha subunit and a beta subunit. PSII is composed of 1 copy each of membrane proteins PsbA, PsbB, PsbC, PsbD, PsbE, PsbF, PsbH, PsbI, PsbJ, PsbK, PsbL, PsbM, PsbT, PsbX, PsbY, PsbZ, Psb30/Ycf12, peripheral proteins PsbO, CyanoQ (PsbQ), PsbU, PsbV and a large number of cofactors. It forms dimeric complexes. Requires heme b as cofactor.

The protein resides in the cellular thylakoid membrane. In terms of biological role, this b-type cytochrome is tightly associated with the reaction center of photosystem II (PSII). PSII is a light-driven water:plastoquinone oxidoreductase that uses light energy to abstract electrons from H(2)O, generating O(2) and a proton gradient subsequently used for ATP formation. It consists of a core antenna complex that captures photons, and an electron transfer chain that converts photonic excitation into a charge separation. The chain is Cytochrome b559 subunit alpha from Gloeothece citriformis (strain PCC 7424) (Cyanothece sp. (strain PCC 7424)).